Here is a 184-residue protein sequence, read N- to C-terminus: Protein OPG161 (184 aa).

The Intravirion segment spans residues 1 to 33 (MMTPENDEEQTSVFSATVYGDKIQGKNKRKRVI). Residues 34 to 56 (GICIRISMVISLLSMITMSAFLI) form a helical membrane-spanning segment. Residues 57–184 (VRLNQCMSAN…RKYFCVKTMN (128 aa)) are Virion surface-facing. Residues 98 to 184 (SCNGLYYQGS…RKYFCVKTMN (87 aa)) are C-type lectin-like domain. N134 carries N-linked (GlcNAc...) asparagine; by host glycosylation.

This sequence belongs to the orthopoxvirus OPG161 family. As to quaternary structure, homodimer, disulfide-linked. Interacts with protein OPG190. Interacts (via C-terminus) with protein OPG164. Interacts with OPG162.

The protein resides in the virion membrane. Its subcellular location is the host membrane. Forms a complex with OPG162 and OPG190 to coordinate the incorporation of OPG164 into wrapped enveloped virion (EV) membranes and, subsequently, the production of actin tails. Therefore plays an essential role in efficient cell-to-cell spread of viral particles. The chain is Protein OPG161 (OPG161) from Homo sapiens (Human).